Consider the following 209-residue polypeptide: ATP-dependent Clp protease proteolytic subunit (209 aa).

The Nucleophile role is filled by Ser106. His131 is an active-site residue.

This sequence belongs to the peptidase S14 family. In terms of assembly, fourteen ClpP subunits assemble into 2 heptameric rings which stack back to back to give a disk-like structure with a central cavity, resembling the structure of eukaryotic proteasomes.

It localises to the cytoplasm. It carries out the reaction Hydrolysis of proteins to small peptides in the presence of ATP and magnesium. alpha-casein is the usual test substrate. In the absence of ATP, only oligopeptides shorter than five residues are hydrolyzed (such as succinyl-Leu-Tyr-|-NHMec, and Leu-Tyr-Leu-|-Tyr-Trp, in which cleavage of the -Tyr-|-Leu- and -Tyr-|-Trp bonds also occurs).. Cleaves peptides in various proteins in a process that requires ATP hydrolysis. Has a chymotrypsin-like activity. Plays a major role in the degradation of misfolded proteins. This Caulobacter vibrioides (strain ATCC 19089 / CIP 103742 / CB 15) (Caulobacter crescentus) protein is ATP-dependent Clp protease proteolytic subunit.